The following is a 163-amino-acid chain: ATP synthase subunit b 1 (163 aa).

A helical membrane pass occupies residues 7-27 (AETWVAIAFVILLGVFAYLGV).

Belongs to the ATPase B chain family. F-type ATPases have 2 components, F(1) - the catalytic core - and F(0) - the membrane proton channel. F(1) has five subunits: alpha(3), beta(3), gamma(1), delta(1), epsilon(1). F(0) has three main subunits: a(1), b(2) and c(10-14). The alpha and beta chains form an alternating ring which encloses part of the gamma chain. F(1) is attached to F(0) by a central stalk formed by the gamma and epsilon chains, while a peripheral stalk is formed by the delta and b chains.

The protein localises to the cell inner membrane. F(1)F(0) ATP synthase produces ATP from ADP in the presence of a proton or sodium gradient. F-type ATPases consist of two structural domains, F(1) containing the extramembraneous catalytic core and F(0) containing the membrane proton channel, linked together by a central stalk and a peripheral stalk. During catalysis, ATP synthesis in the catalytic domain of F(1) is coupled via a rotary mechanism of the central stalk subunits to proton translocation. Its function is as follows. Component of the F(0) channel, it forms part of the peripheral stalk, linking F(1) to F(0). The polypeptide is ATP synthase subunit b 1 (Rhodopseudomonas palustris (strain ATCC BAA-98 / CGA009)).